Consider the following 334-residue polypeptide: Sterol 4-C-methyltransferase strm-1 (334 aa).

It belongs to the class I-like SAM-binding methyltransferase superfamily. Erg6/SMT family. In terms of tissue distribution, expressed in the pharynx and hypodermal syncytium.

The catalysed reaction is 5alpha-cholest-7-en-3-one + S-adenosyl-L-methionine = 4alpha-methyl-5alpha-cholest-7-en-3-one + S-adenosyl-L-homocysteine + H(+). It participates in steroid hormone biosynthesis; dafachronic acid biosynthesis. Its function is as follows. Catalyzes the methyl transfer from S-adenosyl-methionine to the C-4 of the A-ring sterols such as lathosterone (5alpha-cholest-7-en-3-one) thereby rendering them unsuitable as ligand precursors. May irreversibly shunt sterols away from hormone dafachronic acid production. Dafachronic acids act as ligands and bind directly to the nuclear hormone receptor (NHR) daf-12 suppressing dauer formation and inducing reproductive growth. By reducing the biosynthesis of dafachronic acids, this methyltransferase can regulate dauer larva formation. This Caenorhabditis elegans protein is Sterol 4-C-methyltransferase strm-1 (strm-1).